Reading from the N-terminus, the 277-residue chain is Large ribosomal subunit protein uL15c (277 aa).

Residues 1–67 (MATPLSISSN…FARPLVVVSQ (67 aa)) constitute a chloroplast transit peptide. An N-acetylthreonine modification is found at T68. The disordered stretch occupies residues 81 to 125 (FRLDNLGPQPGSRKKQKRKGRGISAGQGASCGFGMRGQKSRSGPG). Positions 92-101 (SRKKQKRKGR) are enriched in basic residues. Residues 103-115 (ISAGQGASCGFGM) show a composition bias toward gly residues.

The protein belongs to the universal ribosomal protein uL15 family. In terms of assembly, part of the 50S ribosomal subunit.

Its subcellular location is the plastid. The protein resides in the chloroplast. In Arabidopsis thaliana (Mouse-ear cress), this protein is Large ribosomal subunit protein uL15c (RPL15).